Consider the following 359-residue polypeptide: Type-1 angiotensin II receptor A (359 aa).

The Extracellular segment spans residues 1–25 (MALNSSAEDGIKRIQDDCPKAGRHS). Asn-4 carries an N-linked (GlcNAc...) asparagine glycan. 2 residues coordinate angiotensin II: Gln-15 and Asp-17. Intrachain disulfides connect Cys-18/Cys-274 and Cys-101/Cys-180. The helical transmembrane segment at 26–55 (YIFVMIPTLYSIIFVVGIFGNSLVVIVIYF) threads the bilayer. At 56 to 61 (YMKLKT) the chain is on the cytoplasmic side. A helical transmembrane segment spans residues 62 to 89 (VASVFLLNLALADLCFLLTLPLWAVYTA). Residues 90-98 (MEYRWPFGN) lie on the Extracellular side of the membrane. Residues 99–125 (HLCKIASASVSFNLYASVFLLTCLSID) form a helical membrane-spanning segment. Topologically, residues 126–141 (RYLAIVHPMKSRLRRT) are cytoplasmic. Residues 142-165 (MLVAKVTCIIIWLMAGLASLPAVI) traverse the membrane as a helical segment. Topologically, residues 166-190 (HRNVYFIENTNITVCAFHYESRNST) are extracellular. Arg-167 lines the angiotensin II pocket. A glycan (N-linked (GlcNAc...) asparagine) is linked at Asn-176. Residues Phe-182, His-183, and Tyr-184 each coordinate angiotensin II. N-linked (GlcNAc...) asparagine glycosylation is present at Asn-188. A helical membrane pass occupies residues 191–216 (LPIGLGLTKNILGFLFPFLIILTSYT). Lys-199 serves as a coordination point for angiotensin II. Over 217–239 (LIWKALKKAYEIQKNKPRNDDIF) the chain is Cytoplasmic. A helical membrane pass occupies residues 240-268 (RIIMAIVLFFFFSWVPHQIFTFLDVLIQL). Over 269 to 278 (GVIHDCKISD) the chain is Extracellular. The helical transmembrane segment at 279–304 (IVDTAMPITICIAYFNNCLNPLFYGF) threads the bilayer. Topologically, residues 305–359 (LGKKFKKYFLQLLKYIPPKAKSHSSLSTKMSTLSYRPSDNMSSSAKKPASCFEVE) are cytoplasmic. The segment covering 337–349 (LSYRPSDNMSSSA) has biased composition (polar residues). Residues 337-359 (LSYRPSDNMSSSAKKPASCFEVE) form a disordered region. A lipid anchor (S-palmitoyl cysteine) is attached at Cys-355.

It belongs to the G-protein coupled receptor 1 family. Interacts with MAS1. Interacts with ARRB1. Interacts with FLNA (via filamin repeat 21); increases PKA-mediated phosphorylation of FLNA. In terms of processing, C-terminal Ser or Thr residues may be phosphorylated. Is expressed in the liver, kidney, aorta, lung, uterus, ovary, spleen, heart, adrenal gland, and vascular smooth muscle cell.

Its subcellular location is the cell membrane. Receptor for angiotensin II, a vasoconstricting peptide, which acts as a key regulator of blood pressure and sodium retention by the kidney. The activated receptor in turn couples to G-alpha proteins G(q) (GNAQ, GNA11, GNA14 or GNA15) and thus activates phospholipase C and increases the cytosolic Ca(2+) concentrations, which in turn triggers cellular responses such as stimulation of protein kinase C. The chain is Type-1 angiotensin II receptor A (Agtr1) from Rattus norvegicus (Rat).